Here is a 188-residue protein sequence, read N- to C-terminus: SRP-independent targeting protein 3 (188 aa).

A helical transmembrane segment spans residues 27–47 (TIIMYIRILYCSSIGISWIIY). Ser157 is subject to Phosphoserine. The tract at residues 157-188 (SLFGGMGQTGPKTDKKSIEEAERAGNAGVKAE) is disordered. Over residues 168–179 (KTDKKSIEEAER) the composition is skewed to basic and acidic residues.

It belongs to the PHO88 family. Interacts with ENV10/SND2. ENV10/SND2 and PHO88/SND3 form a complex with the translocon in the endoplasmic reticulum membrane.

It localises to the endoplasmic reticulum membrane. The protein localises to the mitochondrion. Its function is as follows. Functions in the SND pathway, a SRP (signal recognition particle) and GET (guided entry of tail-anchored proteins) independent pathway for targeting a broad range of substrate proteins to the endoplasmic reticulum. SND functions in parallel to GET in targeting proteins with downstream hydrophobic motifs. Involved in inorganic phosphate uptake. Also involved in telomere length regulation and maintenance. The sequence is that of SRP-independent targeting protein 3 from Saccharomyces cerevisiae (strain ATCC 204508 / S288c) (Baker's yeast).